Here is a 568-residue protein sequence, read N- to C-terminus: Kelch-like protein 12 (568 aa).

Positions 33–100 (CDVTLRVEQK…VYTETVHVTV (68 aa)) constitute a BTB domain. Positions 135 to 236 (CLGIRDFAET…LTPRYITDVI (102 aa)) constitute a BACK domain. 6 Kelch repeats span residues 282–329 (VLLV…SLHD), 331–379 (IYVI…TLGD), 380–426 (MIYV…VASG), 427–473 (VIYC…LLND), 474–520 (HIYV…VLRG), and 522–567 (LYAI…ALRE).

In terms of assembly, component of the BCR(KLHL12) E3 ubiquitin ligase complex, at least composed of CUL3 and KLHL12 and RBX1. This complex interacts with DVL3 upon activation of the Wnt signaling pathway by WNT3A. Interacts with DRD4, KLHL2 and SEC31A. Interacts with PEF1 and PDCD6/ALG-2; interaction takes place in response to cytosolic calcium increase and leads to bridge together the BCR(KLHL12) complex and SEC31 (SEC31A or SEC31B). Ubiquitinated by the SCF(FBXL17) complex, leading to its degradation by the proteasome: ubiquitination by the SCF(FBXL17) complex takes place when aberrant BTB domain dimers are formed.

Its subcellular location is the cytoplasmic vesicle. It localises to the COPII-coated vesicle. It participates in protein modification; protein ubiquitination. Its function is as follows. Substrate-specific adapter of a BCR (BTB-CUL3-RBX1) E3 ubiquitin ligase complex that acts as a negative regulator of Wnt signaling pathway and ER-Golgi transport. The BCR(KLHL12) complex is involved in ER-Golgi transport by regulating the size of COPII coats, thereby playing a key role in collagen export, which is required for embryonic stem (ES) cells division: BCR(KLHL12) acts by mediating monoubiquitination of SEC31 (SEC31A or SEC31B). The BCR(KLHL12) complex is also involved in neural crest specification: in response to cytosolic calcium increase, interacts with the heterodimer formed with PEF1 and PDCD6/ALG-2, leading to bridge together the BCR(KLHL12) complex and SEC31 (SEC31A or SEC31B), promoting monoubiquitination of SEC31 and subsequent collagen export. As part of the BCR(KLHL12) complex, also acts as a negative regulator of the Wnt signaling pathway by mediating ubiquitination and subsequent proteolysis of DVL3. The BCR(KLHL12) complex also mediates polyubiquitination of DRD4 and PEF1, without leading to degradation of these proteins. This is Kelch-like protein 12 (KLHL12) from Bos taurus (Bovine).